We begin with the raw amino-acid sequence, 286 residues long: Ribose-phosphate pyrophosphokinase (286 aa).

ATP contacts are provided by residues 34–36 (DGE) and 91–92 (RQ). H124 and D161 together coordinate Mg(2+). Residue K184 is part of the active site. D-ribose 5-phosphate contacts are provided by residues R186, D210, and 214–218 (STGGT).

It belongs to the ribose-phosphate pyrophosphokinase family. Class III (archaeal) subfamily. Requires Mg(2+) as cofactor.

The protein localises to the cytoplasm. The enzyme catalyses D-ribose 5-phosphate + ATP = 5-phospho-alpha-D-ribose 1-diphosphate + AMP + H(+). The protein operates within metabolic intermediate biosynthesis; 5-phospho-alpha-D-ribose 1-diphosphate biosynthesis; 5-phospho-alpha-D-ribose 1-diphosphate from D-ribose 5-phosphate (route I): step 1/1. In terms of biological role, involved in the biosynthesis of the central metabolite phospho-alpha-D-ribosyl-1-pyrophosphate (PRPP) via the transfer of pyrophosphoryl group from ATP to 1-hydroxyl of ribose-5-phosphate (Rib-5-P). This chain is Ribose-phosphate pyrophosphokinase, found in Thermoplasma acidophilum (strain ATCC 25905 / DSM 1728 / JCM 9062 / NBRC 15155 / AMRC-C165).